The chain runs to 342 residues: Isopentenyl-diphosphate delta-isomerase (342 aa).

12–13 (RK) contributes to the substrate binding site. FMN contacts are provided by residues 71 to 73 (AMT), Ser101, and Asn129. 101 to 103 (SQR) contributes to the substrate binding site. Gln163 contacts substrate. Glu164 contributes to the Mg(2+) binding site. FMN is bound by residues Lys195, Thr225, 272–274 (GIR), and 293–294 (AR).

It belongs to the IPP isomerase type 2 family. Homooctamer. Dimer of tetramers. FMN is required as a cofactor. NADPH serves as cofactor. Requires Mg(2+) as cofactor.

It is found in the cytoplasm. The enzyme catalyses isopentenyl diphosphate = dimethylallyl diphosphate. In terms of biological role, involved in the biosynthesis of isoprenoids. Catalyzes the 1,3-allylic rearrangement of the homoallylic substrate isopentenyl (IPP) to its allylic isomer, dimethylallyl diphosphate (DMAPP). The protein is Isopentenyl-diphosphate delta-isomerase of Mycolicibacterium gilvum (strain PYR-GCK) (Mycobacterium gilvum (strain PYR-GCK)).